The chain runs to 1737 residues: Myosin-M heavy chain (1737 aa).

One can recognise a Myosin N-terminal SH3-like domain in the interval 4-55 (LEGDIVWVPHTVNGYCRGKIIGYNEKNQVTVRLLELNEEIKINEQLIQNYNQ). A Myosin motor domain is found at 59–886 (KDFSDMVEIQ…LYIYLEKKRY (828 aa)). 154-161 (GESGSGKT) is a binding site for ATP. Residues 640-727 (KSNDNNSNNN…NNNSSNNKKS (88 aa)) form a disordered region. Composition is skewed to low complexity over residues 641–663 (SNDN…SSQS) and 679–724 (NSGS…SSNN). Residues 754–761 (YIRCIKPN) are actin-binding. 2 consecutive IQ domains span residues 889 to 918 (LVDS…SSLF) and 912 to 941 (NKES…LENK). A coiled-coil region spans residues 926–1039 (QRAKKDFEQL…KKKNEQNLSL (114 aa)). Over residues 947-1028 (RKKELERQRK…IEKKRKEEEK (82 aa)) the composition is skewed to basic and acidic residues. Disordered regions lie at residues 947–1099 (RKKE…PSTK), 1117–1199 (LHGS…PNFN), 1266–1290 (GINK…ANSS), and 1304–1364 (SLST…SNED). Residues 1044–1070 (ITNSPSLINTTTTTTTTTTTTTNTSSP) are compositionally biased toward low complexity. The segment covering 1071-1081 (PLSPPISPRPS) has biased composition (pro residues). A compositionally biased stretch (low complexity) spans 1082-1098 (TPSSTSSSSSTTSSPST). Residues 1121 to 1131 (SHSDKNSKEDN) are compositionally biased toward basic and acidic residues. Residues 1132-1141 (NSNNNNNGDS) show a composition bias toward low complexity. The segment covering 1143–1153 (IILSSDSSFGQ) has biased composition (polar residues). The segment covering 1162 to 1171 (PTPPPPPPLK) has biased composition (pro residues). Composition is skewed to polar residues over residues 1180 to 1198 (GVEN…SPNF) and 1274 to 1288 (RTIS…SRAN). Over residues 1304–1359 (SLSTSTTPSTPTTPKTPTTLSSSSVSTSTSLSSVSSSVSSSSSSSIPTPIIESTPS) the composition is skewed to low complexity. The DH domain occupies 1389 to 1572 (FRIKIINELI…SDIVQSINEA (184 aa)). The region spanning 1603 to 1714 (TLLMEGTVSA…WFKQIKALIQ (112 aa)) is the PH domain.

Belongs to the TRAFAC class myosin-kinesin ATPase superfamily. Myosin family. Monomer.

It localises to the cytoplasm. In terms of biological role, myosins are actin-based motor molecules with ATPase activity. Involved in macropinocytosis and remodeling of actin cytoskeleton. This Dictyostelium discoideum (Social amoeba) protein is Myosin-M heavy chain (myoM).